The chain runs to 401 residues: Putative hetero-Diels-Alderase asR5 (401 aa).

The signal sequence occupies residues 1-21 (MRRSFLISAALGLSMSTPALA). N-linked (GlcNAc...) asparagine glycosylation is found at Asn-71, Asn-77, Asn-240, and Asn-334.

This sequence belongs to the eupF Diels-Alderase family.

It functions in the pathway secondary metabolite biosynthesis; terpenoid biosynthesis. Putative hetero-Diels-Alderase; part of the gene cluster that mediates the biosynthesis of xenovulene A, an unusual meroterpenoid that has potent inhibitory effects on the human gamma-aminobutyrate A (GABAA) benzodiazepine receptor. The first step of xenovulene A biosynthesis is the biosynthesis of 3-methylorcinaldehyde performed by the non-reducing polyketide synthase aspks1. The salicylate hydroxylase asL1 then catalyzes the oxidative dearomatization of 3-methylorcinaldehyde to yield a dearomatized hydroxycyclohexadione. The 2-oxoglutarate-dependent dioxygenase asL3 further catalyzes the oxidative ring expansion to provide the first tropolone metabolite. The cytochrome P450 monooxygenase asR2 allows the synthesis of tropolone hemiacetal. In parallel, a previously unrecognised class of terpene cyclase, asR6, produces alpha-humulene from farnesylpyrophosphate (FPP). The putative Diels-Alderase asR5 probably catalyzes the formation of the tropolone-humulene skeleton by linking humulene and the polyketide moiety. Oxidative-ring contractions catalyzed by asL4 and asL6 then processively remove carbon atoms from the polyketide to yield xenovulene A. This chain is Putative hetero-Diels-Alderase asR5, found in Sarocladium schorii (Acremonium strictum (strain IMI 501407)).